The chain runs to 100 residues: Aspartyl/glutamyl-tRNA(Asn/Gln) amidotransferase subunit C (100 aa).

This sequence belongs to the GatC family. As to quaternary structure, heterotrimer of A, B and C subunits.

The enzyme catalyses L-glutamyl-tRNA(Gln) + L-glutamine + ATP + H2O = L-glutaminyl-tRNA(Gln) + L-glutamate + ADP + phosphate + H(+). It carries out the reaction L-aspartyl-tRNA(Asn) + L-glutamine + ATP + H2O = L-asparaginyl-tRNA(Asn) + L-glutamate + ADP + phosphate + 2 H(+). Its function is as follows. Allows the formation of correctly charged Asn-tRNA(Asn) or Gln-tRNA(Gln) through the transamidation of misacylated Asp-tRNA(Asn) or Glu-tRNA(Gln) in organisms which lack either or both of asparaginyl-tRNA or glutaminyl-tRNA synthetases. The reaction takes place in the presence of glutamine and ATP through an activated phospho-Asp-tRNA(Asn) or phospho-Glu-tRNA(Gln). In Erythrobacter litoralis (strain HTCC2594), this protein is Aspartyl/glutamyl-tRNA(Asn/Gln) amidotransferase subunit C.